A 163-amino-acid polypeptide reads, in one-letter code: Endoribonuclease YbeY (163 aa).

Residues H119, H123, and H129 each contribute to the Zn(2+) site.

This sequence belongs to the endoribonuclease YbeY family. It depends on Zn(2+) as a cofactor.

The protein resides in the cytoplasm. In terms of biological role, single strand-specific metallo-endoribonuclease involved in late-stage 70S ribosome quality control and in maturation of the 3' terminus of the 16S rRNA. In Actinobacillus pleuropneumoniae serotype 5b (strain L20), this protein is Endoribonuclease YbeY.